The following is a 766-amino-acid chain: U3 small nucleolar RNA-associated protein 14 homolog C (766 aa).

The tract at residues 14–42 is disordered; it reads HQEELVDLPKNYPLSENEDEGDSDGERKH. Phosphoserine is present on residues Ser28, Ser51, Ser76, and Ser80. Lys121 is covalently cross-linked (Glycyl lysine isopeptide (Lys-Gly) (interchain with G-Cter in SUMO2)). At Thr204 the chain carries Phosphothreonine. Coiled-coil stretches lie at residues 216–245 and 316–346; these read LEEAKMHRAELQRARALQSYYEAKARKEKK and LEARQAMQEQLAKNKELTQKLQVASESEEEE. Residues 365–563 form a disordered region; that stretch reads MNVDGPNPWM…EQLINLQNFL (199 aa). A compositionally biased stretch (low complexity) spans 396–405; the sequence is ELAAHEVSAS. Phosphoserine is present on residues Ser403 and Ser405. Basic and acidic residues predominate over residues 407-434; that stretch reads AEERPVAEEEILLREFEERQSLRKRSEL. Phosphoserine is present on Ser443. Lys447 participates in a covalent cross-link: Glycyl lysine isopeptide (Lys-Gly) (interchain with G-Cter in SUMO2). Phosphoserine is present on Ser451. A coiled-coil region spans residues 452–470; the sequence is QEVLSELRALSQKLKEKHQ. The segment covering 466–475 has biased composition (basic residues); sequence KEKHQSRKQK. The segment covering 502–527 has biased composition (basic and acidic residues); the sequence is RSERVQTLEELEELGKEDCFQNKELP. Lys517 is covalently cross-linked (Glycyl lysine isopeptide (Lys-Gly) (interchain with G-Cter in SUMO2)). Residues 533-542 are compositionally biased toward polar residues; it reads GQQSERTPNN. Residues 545 to 555 are compositionally biased toward basic and acidic residues; it reads DAPKEKKEKEQ. Ser567 bears the Phosphoserine mark. Residue Lys732 forms a Glycyl lysine isopeptide (Lys-Gly) (interchain with G-Cter in SUMO2) linkage. The tract at residues 734–766 is disordered; it reads EDVGYQSSSRSDLPVIQRNPKRITTRHNKEEKL.

The protein belongs to the UTP14 family. In terms of tissue distribution, expressed in testis.

It is found in the nucleus. The protein localises to the nucleolus. Functionally, essential for spermatogenesis. May be required specifically for ribosome biogenesis and hence protein synthesis during male meiosis. The chain is U3 small nucleolar RNA-associated protein 14 homolog C (UTP14C) from Homo sapiens (Human).